The following is a 364-amino-acid chain: Paraneoplastic antigen Ma2 homolog (364 aa).

Ala-2 carries the post-translational modification N-acetylalanine. Residues 335–353 (EEEEASFENESIEEPEEGD) show a composition bias toward acidic residues. Residues 335–364 (EEEEASFENESIEEPEEGDGYGRWNHEGDD) are disordered.

It belongs to the PNMA family.

The protein resides in the nucleus. It is found in the nucleolus. In Pongo abelii (Sumatran orangutan), this protein is Paraneoplastic antigen Ma2 homolog (PNMA2).